A 281-amino-acid polypeptide reads, in one-letter code: Pantothenate synthetase (281 aa).

30–37 (MGNLHLGH) lines the ATP pocket. The Proton donor role is filled by His37. Gln61 is a (R)-pantoate binding site. Position 61 (Gln61) interacts with beta-alanine. Position 149–152 (149–152 (GRKD)) interacts with ATP. Gln155 provides a ligand contact to (R)-pantoate. ATP-binding positions include Ile178 and 186–189 (MSSR).

This sequence belongs to the pantothenate synthetase family. Homodimer.

The protein localises to the cytoplasm. It carries out the reaction (R)-pantoate + beta-alanine + ATP = (R)-pantothenate + AMP + diphosphate + H(+). The protein operates within cofactor biosynthesis; (R)-pantothenate biosynthesis; (R)-pantothenate from (R)-pantoate and beta-alanine: step 1/1. Its function is as follows. Catalyzes the condensation of pantoate with beta-alanine in an ATP-dependent reaction via a pantoyl-adenylate intermediate. The protein is Pantothenate synthetase of Shewanella woodyi (strain ATCC 51908 / MS32).